The sequence spans 208 residues: Potassium-transporting ATPase KdpC subunit (208 aa).

Residues 6 to 26 traverse the membrane as a helical segment; the sequence is PALLVSIVLLVVCGLVYPLVL.

Belongs to the KdpC family. In terms of assembly, the system is composed of three essential subunits: KdpA, KdpB and KdpC.

The protein localises to the cell membrane. Part of the high-affinity ATP-driven potassium transport (or Kdp) system, which catalyzes the hydrolysis of ATP coupled with the electrogenic transport of potassium into the cytoplasm. This subunit acts as a catalytic chaperone that increases the ATP-binding affinity of the ATP-hydrolyzing subunit KdpB by the formation of a transient KdpB/KdpC/ATP ternary complex. This Clostridioides difficile (strain 630) (Peptoclostridium difficile) protein is Potassium-transporting ATPase KdpC subunit.